Consider the following 97-residue polypeptide: Co-chaperonin GroES (97 aa).

This sequence belongs to the GroES chaperonin family. Heptamer of 7 subunits arranged in a ring. Interacts with the chaperonin GroEL.

It localises to the cytoplasm. Functionally, together with the chaperonin GroEL, plays an essential role in assisting protein folding. The GroEL-GroES system forms a nano-cage that allows encapsulation of the non-native substrate proteins and provides a physical environment optimized to promote and accelerate protein folding. GroES binds to the apical surface of the GroEL ring, thereby capping the opening of the GroEL channel. The chain is Co-chaperonin GroES from Blochmanniella floridana.